Reading from the N-terminus, the 90-residue chain is Small ribosomal subunit protein uS15c (90 aa).

Belongs to the universal ribosomal protein uS15 family. Part of the 30S ribosomal subunit.

The protein localises to the plastid. It localises to the chloroplast. This Acorus calamus (Sweet flag) protein is Small ribosomal subunit protein uS15c (rps15).